The primary structure comprises 776 residues: Protein translocase subunit SecA 2 (776 aa).

ATP-binding positions include Gln80, 98-102 (GEGKT), and Asp486.

The protein belongs to the SecA family. Monomer and homodimer. Part of the essential Sec protein translocation apparatus which comprises SecA, SecYEG and auxiliary proteins SecDF. Other proteins may also be involved.

The protein localises to the cell membrane. Its subcellular location is the cytoplasm. The catalysed reaction is ATP + H2O + cellular proteinSide 1 = ADP + phosphate + cellular proteinSide 2.. Functionally, part of the Sec protein translocase complex. Interacts with the SecYEG preprotein conducting channel. Has a central role in coupling the hydrolysis of ATP to the transfer of proteins into and across the cell membrane, serving as an ATP-driven molecular motor driving the stepwise translocation of polypeptide chains across the membrane. The sequence is that of Protein translocase subunit SecA 2 from Listeria monocytogenes serotype 4b (strain F2365).